Here is a 132-residue protein sequence, read N- to C-terminus: Interleukin-13 (132 aa).

A signal peptide spans 1 to 18 (MALLLTMVIALTCLGGFA). N-linked (GlcNAc...) asparagine glycans are attached at residues asparagine 38, asparagine 49, asparagine 57, and asparagine 72. Disulfide bonds link cysteine 48–cysteine 76 and cysteine 64–cysteine 90.

This sequence belongs to the IL-4/IL-13 family. Interacts with IL13RA2.

It is found in the secreted. Cytokine that plays important roles in allergic inflammation and immune response to parasite infection. Synergizes with IL2 in regulating interferon-gamma synthesis. Stimulates B-cell proliferation, and activation of eosinophils, basophils, and mast cells. Plays an important role in controlling IL33 activity by modulating the production of transmembrane and soluble forms of interleukin-1 receptor-like 1/IL1RL1. Displays the capacity to antagonize Th1-driven proinflammatory immune response and downregulates synthesis of many proinflammatory cytokines including IL1, IL6, IL10, IL12 and TNF-alpha through a mechanism that partially involves suppression of NF-kappa-B. Also functions on nonhematopoietic cells, including endothelial cells where it induces vascular cell adhesion protein 1/VCAM1, which is important in the recruitment of eosinophils. Exerts its biological effects through its receptors which comprises the IL4R chain and the IL13RA1 chain, to activate JAK1 and TYK2, leading to the activation of STAT6. Aside from IL13RA1, another receptor IL13RA2 acts as a high affinity decoy for IL13 and mediates internalization and depletion of extracellular IL13. In Macaca thibetana (Pere David's macaque), this protein is Interleukin-13 (IL13).